We begin with the raw amino-acid sequence, 515 residues long: Synaptic vesicular amine transporter (515 aa).

Over methionine 1–lysine 20 the chain is Cytoplasmic. A helical membrane pass occupies residues leucine 21 to valine 41. Residues proline 42–valine 130 lie on the Lumenal, vesicle side of the membrane. Asparagine 56, asparagine 80, asparagine 81, asparagine 89, and asparagine 111 each carry an N-linked (GlcNAc...) asparagine glycan. Cysteine 118 and cysteine 325 are oxidised to a cystine. A helical membrane pass occupies residues glutamine 131–glycine 151. Topologically, residues leucine 152–proline 160 are cytoplasmic. A helical transmembrane segment spans residues isoleucine 161–serine 181. The Lumenal, vesicle portion of the chain corresponds to serine 182–arginine 190. The chain crosses the membrane as a helical span at residues serine 191–valine 211. Over tyrosine 212–lysine 220 the chain is Cytoplasmic. The helical transmembrane segment at proline 221–leucine 243 threads the bilayer. Serotonin-binding residues include leucine 229 and valine 233. The Lumenal, vesicle portion of the chain corresponds to tyrosine 244–lysine 249. Residues threonine 250 to glutamine 272 form a helical membrane-spanning segment. Topologically, residues proline 273–aspartate 292 are cytoplasmic. The chain crosses the membrane as a helical span at residues proline 293–leucine 312. Residues asparagine 306, isoleucine 309, glutamate 313, phenylalanine 335, and tyrosine 342 each contribute to the serotonin site. At glutamate 313–tryptophan 329 the chain is on the lumenal, vesicle side. The chain crosses the membrane as a helical span at residues glutamine 330–alanine 353. The Cytoplasmic segment spans residues histidine 354–arginine 358. The helical transmembrane segment at tryptophan 359–alanine 379 threads the bilayer. The Lumenal, vesicle segment spans residues lysine 380–phenylalanine 390. The helical transmembrane segment at glycine 391–valine 411 threads the bilayer. Position 400 (aspartate 400) interacts with serotonin. Residues aspartate 412 to histidine 415 lie on the Cytoplasmic side of the membrane. Residues valine 416–isoleucine 436 form a helical membrane-spanning segment. Tyrosine 434 contributes to the serotonin binding site. The Lumenal, vesicle segment spans residues glycine 437–glycine 441. The chain crosses the membrane as a helical span at residues glycine 442–alanine 463. Residues phenylalanine 464–aspartate 515 lie on the Cytoplasmic side of the membrane. Phosphoserine; by CK2 is present on residues serine 512 and serine 514.

It belongs to the major facilitator superfamily. Vesicular transporter family. Interacts with SLC6A3. As to expression, expressed in the substantia nigra and the tuberomammillary nucleus of the posterior hypothalamus. Expressed in stomach, in particular in varicose nerve fibers and enterochromaffin-like cells in the corpus region (at protein level).

It is found in the cytoplasmic vesicle. The protein resides in the secretory vesicle. Its subcellular location is the synaptic vesicle membrane. The protein localises to the secretory vesicle membrane. It localises to the cell projection. It is found in the axon. The protein resides in the dendrite. The enzyme catalyses serotonin(in) + 2 H(+)(out) = serotonin(out) + 2 H(+)(in). It catalyses the reaction dopamine(in) + 2 H(+)(out) = dopamine(out) + 2 H(+)(in). It carries out the reaction histamine(in) + 2 H(+)(out) = histamine(out) + 2 H(+)(in). With respect to regulation, strongly inhibited by reserpine and tetrabenazine. Also inhibited to a lesser extent by ketanserin and fenfluramine. Reserpine and ketanserin inhibit by blocking the substrate-binding pocket. Tetrabenazine traps SLC18A2/VMAT2 in an occluded conformation and its inhibition is specific to SLC18A2/VMAT2 but not SLC18A1/VMAT1. Functionally, electrogenic antiporter that exchanges one cationic monoamine with two intravesicular protons across the membrane of secretory and synaptic vesicles. Uses the electrochemical proton gradient established by the V-type proton-pump ATPase to accumulate high concentrations of monoamines inside the vesicles prior to their release via exocytosis. Transports a variety of catecholamines such as dopamine, adrenaline and noradrenaline, histamine, and indolamines such as serotonin. Regulates the transvesicular monoaminergic gradient that determines the quantal size. Mediates somatodendritic dopamine release in hippocampal neurons, likely as part of a regulated secretory pathway that integrates retrograde synaptic signals. Acts as a primary transporter for striatal dopamine loading ensuring impulse-dependent release of dopamine at the synaptic cleft. Responsible for histamine and serotonin storage and subsequent corelease from mast cell granules. The protein is Synaptic vesicular amine transporter (Slc18a2) of Rattus norvegicus (Rat).